The primary structure comprises 157 residues: Large ribosomal subunit protein uL11 (157 aa).

This sequence belongs to the universal ribosomal protein uL11 family.

This protein binds directly to 26S ribosomal RNA. This chain is Large ribosomal subunit protein uL11 (RPL12), found in Chlamydomonas reinhardtii (Chlamydomonas smithii).